We begin with the raw amino-acid sequence, 30 residues long: Cycloviolacin-H4 (30 aa).

Positions Gly1–Asn30 form a cross-link, cyclopeptide (Gly-Asn). Cystine bridges form between Cys4/Cys21, Cys8/Cys23, and Cys13/Cys28.

In terms of processing, this is a cyclic peptide.

Functionally, probably participates in a plant defense mechanism. Has potent hemolytic activity. In Viola hederacea (Australian violet), this protein is Cycloviolacin-H4.